The following is an 80-amino-acid chain: MAEIIPMTEEQKFQLEIYKLVMNQNAAAEEAFQFIGTDELKLELFKIHFQSGGANSDITTRTIEAVRKSREALDLFTTGA.

This is an uncharacterized protein from Salmonella phage P22 (Bacteriophage P22).